We begin with the raw amino-acid sequence, 251 residues long: Probable transcriptional regulatory protein jk1057 (251 aa).

The segment at 1-22 (MAGHSKWATTKHKKAANDAKRG) is disordered.

Belongs to the TACO1 family.

The protein localises to the cytoplasm. In Corynebacterium jeikeium (strain K411), this protein is Probable transcriptional regulatory protein jk1057.